The primary structure comprises 331 residues: ADP-L-glycero-D-manno-heptose-6-epimerase (331 aa).

Residues 11–12, 32–33, K39, K54, 75–79, and N92 contribute to the NADP(+) site; these read FI, DN, and EGACS. Catalysis depends on Y139, which acts as the Proton acceptor. K143 contacts NADP(+). N168 provides a ligand contact to substrate. NADP(+) contacts are provided by V169 and K177. K177 functions as the Proton acceptor in the catalytic mechanism. Substrate-binding positions include R179, H186, 200 to 203, R213, and Y292; that span reads FGEY.

It belongs to the NAD(P)-dependent epimerase/dehydratase family. HldD subfamily. In terms of assembly, homopentamer. It depends on NADP(+) as a cofactor.

It carries out the reaction ADP-D-glycero-beta-D-manno-heptose = ADP-L-glycero-beta-D-manno-heptose. It functions in the pathway nucleotide-sugar biosynthesis; ADP-L-glycero-beta-D-manno-heptose biosynthesis; ADP-L-glycero-beta-D-manno-heptose from D-glycero-beta-D-manno-heptose 7-phosphate: step 4/4. In terms of biological role, catalyzes the interconversion between ADP-D-glycero-beta-D-manno-heptose and ADP-L-glycero-beta-D-manno-heptose via an epimerization at carbon 6 of the heptose. The chain is ADP-L-glycero-D-manno-heptose-6-epimerase from Cupriavidus metallidurans (strain ATCC 43123 / DSM 2839 / NBRC 102507 / CH34) (Ralstonia metallidurans).